Here is a 765-residue protein sequence, read N- to C-terminus: Spastin (765 aa).

Positions 1-94 (MVRTKNQSSS…TSGYGPRGGT (94 aa)) are disordered. Over 1-107 (MVRTKNQSSS…KQNLYVVSFP (107 aa)) the chain is Cytoplasmic. Residues 1-195 (MVRTKNQSSS…ALLPLEMATN (195 aa)) are required for localization to punctate cytoplasmic foci. Positions 8 to 19 (SSSSSASSSTKS) are enriched in low complexity. The span at 48-58 (SSKLSSNRQRA) shows a compositional bias: polar residues. Over residues 59–72 (TITTTTTSTTPGSS) the composition is skewed to low complexity. Residues 108–128 (IIFLFNVLRSLIYQLFCIFRY) constitute an intramembrane region (helical). The Cytoplasmic portion of the chain corresponds to 129 to 765 (LYCASTKVIY…WSQDYGDITI (637 aa)). The segment at 193–765 (ATNRGGSGGY…WSQDYGDITI (573 aa)) is sufficient for interaction with microtubules and microtubule severing. An MIT domain is found at 218-293 (HRRAFEYISK…SMARDRLHFL (76 aa)). The disordered stretch occupies residues 329 to 462 (QTNSKAAAVE…GSGSGASTPM (134 aa)). Low complexity predominate over residues 355-364 (SGTGSSAGTS). Polar residues-rich tracts occupy residues 389-407 (NKSQTLPRNLGSKTTSTSV) and 428-444 (QFSSGRNTPPQRSRTPI). Residues 446 to 462 (NNAASGSGSGSGASTPM) form a required for interaction with microtubules region. 530–537 (GPPGNGKT) is an ATP binding site.

It belongs to the AAA ATPase family. Spastin subfamily. Homohexamer. The homohexamer is stabilized by ATP-binding. The homohexamer may adopt a ring conformation through which microtubules pass prior to being severed. Interacts with microtubules. Interacts with atl; may be involved in microtubule dynamics.

The protein localises to the membrane. It localises to the cytoplasm. The protein resides in the cytoskeleton. Its subcellular location is the microtubule organizing center. It is found in the centrosome. The protein localises to the chromosome. It localises to the lipid droplet. The catalysed reaction is n ATP + n H2O + a microtubule = n ADP + n phosphate + (n+1) alpha/beta tubulin heterodimers.. ATP-dependent microtubule severing protein. Stimulates microtubule minus-end depolymerization and poleward microtubule flux in the mitotic spindle. Regulates microtubule stability in the neuromuscular junction synapse. Involved in lipid metabolism by regulating the size and distribution of lipid droplets. Involved in axon regeneration by regulating microtubule severing. The protein is Spastin of Drosophila mojavensis (Fruit fly).